A 313-amino-acid chain; its full sequence is MAQQPTFASAALVSFFLALICSCSYAAWHHEKDDIPKSDVSLLEFPLNLELLEAEFFAWAAFGKGIDELEPELAKGGPSPIGVQKANLSPFIRDIIAQFAYQEFGHVRAIQSSVEGFPRPLLDLSAKSFATVMDSAFGKTLKPPFDPYANDINYLLACYVVPYVGLTGYVGANPKLESPVSRKLVAGLLAVEAGQDAIIRALLYERATDKVEPYGITVAEFTNKISELRNKLGDKGVKDLGLIVEPELGAEGKISGNVLAGDKNSLAFPRTPERCLGSCTAAAMRPSPAAFIPKAPTGKSPSLIWRIRAFSIV.

The first 26 residues, 1–26 (MAQQPTFASAALVSFFLALICSCSYA), serve as a signal peptide directing secretion.

This Craterostigma plantagineum (Blue gem) protein is Desiccation-related protein PCC13-62.